The following is a 109-amino-acid chain: Archaeosine synthase (109 aa).

Cysteine 21 functions as the Thioimide intermediate in the catalytic mechanism. Aspartate 28 acts as the Proton donor/acceptor in catalysis. Substrate is bound by residues aspartate 28, 43–46, and 62–63; these read LAIE and HE.

This sequence belongs to the archaeosine synthase type 2 family. In terms of assembly, forms a symmetric tunnel-fold (T-fold) homodecamer of two head-to-head facing pentameric subunits, with 10 active sites at the intermonomer interfaces.

It carries out the reaction 7-cyano-7-carbaguanosine(15) in tRNA + NH4(+) = archaeosine(15) in tRNA. The protein operates within tRNA modification; archaeosine-tRNA biosynthesis. Functionally, is responsible for the final step in the biosynthesis of archaeosine, a modified nucleoside present in the dihydrouridine loop (D-loop) of archaeal tRNA. Catalyzes the conversion of 7-cyano-7-deazaguanine (preQ0)-modified tRNA to archaeosine-tRNA, transforming a nitrile group to a formamidine group. Can use neither glutamine nor asparagine as amino donor in vitro, is only able to utilize free ammonium. However, the enzyme might function in vivo with a partner that serves to generate ammonium. The chain is Archaeosine synthase from Pyrobaculum calidifontis (strain DSM 21063 / JCM 11548 / VA1).